Here is a 355-residue protein sequence, read N- to C-terminus: RNA binding protein fox-1 homolog 1 (355 aa).

Positions 1–123 (MNCEREQLRG…QPKRLHVSNI (123 aa)) are disordered. A compositionally biased stretch (polar residues) spans 70–112 (QSHSEQSAADTSAHTVSGTATTDDSAPTDGQPQTQPSENTENK). An RRM domain is found at 116–174 (KRLHVSNIPFRFRDPDLRQMFGGFGFVTFENSADADRAREKLHGTVVEGRKIEVNNATA). Arginine 298 is modified (asymmetric dimethylarginine).

In terms of assembly, binds to the C-terminus of ATXN2.

The protein localises to the nucleus. Its subcellular location is the cytoplasm. RNA-binding protein that regulates alternative splicing events by binding to 5'-UGCAUGU-3' elements. Prevents binding of U2AF2 to the 3'-splice site. Regulates alternative splicing of tissue-specific exons and of differentially spliced exons during erythropoiesis. In Bos taurus (Bovine), this protein is RNA binding protein fox-1 homolog 1 (RBFOX1).